Here is a 340-residue protein sequence, read N- to C-terminus: Fructose import permease protein FruG (340 aa).

The next 9 membrane-spanning stretches (helical) occupy residues 23 to 43 (IPTLAAVVIFILMIIMGQALF), 49 to 69 (LGFISSLFIDHAYLIILAVAM), 73 to 93 (ILTGGIDLSVGAIVAITAVVG), 101 to 121 (VPAFLVMIIMLLIGAVFGLLA), 130 to 150 (MQPFIATLSTMFLARGLASII), 182 to 202 (LSFNVGVIIALVVVVFGYVFL), 234 to 254 (IIYLTSATLAALASIVYTANI), 273 to 293 (VVIGGTIITGGFGYVLGSVLG), and 307 to 327 (FGVPAEWTTIVIGLMILVFVV).

It belongs to the binding-protein-dependent transport system permease family. In terms of assembly, the complex is composed of an ATP-binding protein (FruK), two transmembrane proteins (FruF and FruG) and a solute-binding protein (FruE).

The protein resides in the cell membrane. Its function is as follows. Part of the high-affinity ABC transporter complex FruEKFG involved in fructose uptake. Can also transport ribose and xylose, with lower affinity. Probably responsible for the translocation of the substrate across the membrane. The chain is Fructose import permease protein FruG from Bifidobacterium longum (strain NCC 2705).